The chain runs to 322 residues: HPr kinase/phosphorylase (322 aa).

Residues His-142 and Lys-163 contribute to the active site. 157–164 contributes to the ATP binding site; it reads GASGVGKS. A Mg(2+)-binding site is contributed by Ser-164. Asp-181 serves as the catalytic Proton acceptor; for phosphorylation activity. Proton donor; for dephosphorylation activity. The tract at residues 205–214 is important for the catalytic mechanism of both phosphorylation and dephosphorylation; that stretch reads MEIRGIGIID. Glu-206 lines the Mg(2+) pocket. Arg-247 is a catalytic residue. The interval 268-273 is important for the catalytic mechanism of dephosphorylation; sequence PVKVGR.

It belongs to the HPrK/P family. As to quaternary structure, homohexamer. Mg(2+) serves as cofactor.

The enzyme catalyses [HPr protein]-L-serine + ATP = [HPr protein]-O-phospho-L-serine + ADP + H(+). It catalyses the reaction [HPr protein]-O-phospho-L-serine + phosphate + H(+) = [HPr protein]-L-serine + diphosphate. Functionally, catalyzes the ATP- as well as the pyrophosphate-dependent phosphorylation of a specific serine residue in HPr, a phosphocarrier protein of the phosphoenolpyruvate-dependent sugar phosphotransferase system (PTS). HprK/P also catalyzes the pyrophosphate-producing, inorganic phosphate-dependent dephosphorylation (phosphorolysis) of seryl-phosphorylated HPr (P-Ser-HPr). The two antagonistic activities of HprK/P are regulated by several intracellular metabolites, which change their concentration in response to the absence or presence of rapidly metabolisable carbon sources (glucose, fructose, etc.) in the growth medium. Therefore, by controlling the phosphorylation state of HPr, HPrK/P is a sensor enzyme that plays a major role in the regulation of carbon metabolism and sugar transport: it mediates carbon catabolite repression (CCR), and regulates PTS-catalyzed carbohydrate uptake and inducer exclusion. The chain is HPr kinase/phosphorylase from Lactobacillus acidophilus (strain ATCC 700396 / NCK56 / N2 / NCFM).